The sequence spans 300 residues: Transcriptional dual regulator GltC (300 aa).

In terms of domain architecture, HTH lysR-type spans 1–58 (MELRQLRYFMEVAEREHVSEAADHLHVAQSAISRQIANLEEELNVTLFEREGRNIKLT). Positions 18-37 (VSEAADHLHVAQSAISRQIA) form a DNA-binding region, H-T-H motif.

This sequence belongs to the LysR transcriptional regulatory family. As to quaternary structure, interacts with gutamate dehydrogenase RocG.

With respect to regulation, activated by alpha-ketoglutarate and inhibited by glutamate and by RocG. Positive regulator of glutamate biosynthesis (gltAB genes). Negatively regulates its own expression. The chain is Transcriptional dual regulator GltC (gltC) from Bacillus subtilis (strain 168).